Here is a 122-residue protein sequence, read N- to C-terminus: MIQQESQLKVADNTGAKKVKCFKVLGGSRRRYATVGDVIVCSVRDVEPDSSVKKGDVVKAVIVRTRNDIHRKDGSTLRFDTNSCVIIDDKGNPKGTRIFGPIAREIRDRGFVKISSLAPEVI.

This sequence belongs to the universal ribosomal protein uL14 family. Part of the 50S ribosomal subunit. Forms a cluster with proteins L3 and L19. In the 70S ribosome, L14 and L19 interact and together make contacts with the 16S rRNA in bridges B5 and B8.

Functionally, binds to 23S rRNA. Forms part of two intersubunit bridges in the 70S ribosome. The polypeptide is Large ribosomal subunit protein uL14 (Chlamydia trachomatis serovar A (strain ATCC VR-571B / DSM 19440 / HAR-13)).